A 576-amino-acid chain; its full sequence is Protein NRT1/ PTR FAMILY 2.12 (576 aa).

11 helical membrane passes run 58–78, 89–109, 130–150, 176–196, 203–223, 329–349, 364–384, 406–426, 441–461, 475–495, and 522–542; these read FNVY…GALI, IAYA…TACL, KLQL…SGGI, FFNW…TVVV, WVIG…LFFV, VWSA…FMVF, IPAA…VPIY, MGIG…VEGV, WLAL…IGLI, IANS…SLLV, and YFYY…WYCA.

This sequence belongs to the major facilitator superfamily. Proton-dependent oligopeptide transporter (POT/PTR) (TC 2.A.17) family. In terms of tissue distribution, expressed in flowers and siliques. Expressed in vascular bundle of the siliques and in funiculus.

It is found in the cell membrane. Low-affinity proton-dependent nitrate transporter. Not involved in dipeptides transport. Involved in delivering nitrate for seed development. This is Protein NRT1/ PTR FAMILY 2.12 (NPF2.12) from Arabidopsis thaliana (Mouse-ear cress).